The chain runs to 801 residues: Palmitoyl thioesterase CPT1C (801 aa).

Topologically, residues 1 to 49 (MAEAHQASSLLSSLSSDGAEVELSSSVWQEIYLSALRSWKRNLWRVWND) are cytoplasmic. A helical membrane pass occupies residues 50 to 70 (FLAGVVPATPLSWLFLFSTIQ). The Mitochondrial intermembrane segment spans residues 71-103 (LACLLQLDPSLGLMEKIKELLPDWGGQHHQLQG). The chain crosses the membrane as a helical span at residues 104-124 (LLAAAVFASCLWGTLIFTLHV). Topologically, residues 125-801 (ALRLLLSHHG…PNIPKSSTNL (677 aa)) are cytoplasmic. The active-site Proton acceptor is the histidine 469. 551-563 (GKSFIKGCHVSSD) lines the CoA pocket. 3 residues coordinate (R)-carnitine: tyrosine 585, serine 587, and threonine 598. A required for interaction with GRIA1 region spans residues 760–801 (LFQAGQQFKRQFTGLGESSGWKYSNLSCKTVDPNIPKSSTNL).

The protein belongs to the carnitine/choline acetyltransferase family. In terms of assembly, peripherally associated with AMPAR complex. AMPAR complex consists of an inner core made of 4 pore-forming GluA/GRIA proteins (GRIA1, GRIA2, GRIA3 and GRIA4) and 4 major auxiliary subunits arranged in a twofold symmetry. One of the two pairs of distinct binding sites is occupied either by CNIH2, CNIH3 or CACNG2, CACNG3. The other harbors CACNG2, CACNG3, CACNG4, CACNG8 or GSG1L. This inner core of AMPAR complex is complemented by outer core constituents binding directly to the GluA/GRIA proteins at sites distinct from the interaction sites of the inner core constituents. Outer core constituents include at least PRRT1, PRRT2, CKAMP44/SHISA9, FRRS1L and NRN1. The proteins of the inner and outer core serve as a platform for other, more peripherally associated AMPAR constituents, including CPT1C. Alone or in combination, these auxiliary subunits control the gating and pharmacology of the AMPAR complex and profoundly impact their biogenesis and protein processing. Interacts with SACM1L; the interaction regulates SACM1L phosphatidylinositol-3-phosphatase activity and translocation to endoplasmic reticulum/trans Golgi network in a malonyl-CoA dependent manner. Interacts with ATL1. In terms of tissue distribution, expressed in brain (at protein level).

It is found in the synapse. It localises to the cell projection. The protein localises to the dendrite. Its subcellular location is the axon. The protein resides in the endoplasmic reticulum membrane. It catalyses the reaction S-hexadecanoyl-L-cysteinyl-[protein] + H2O = L-cysteinyl-[protein] + hexadecanoate + H(+). Functionally, palmitoyl thioesterase specifically expressed in the endoplasmic reticulum of neurons. Modulates the trafficking of the glutamate receptor, AMPAR, to plasma membrane through depalmitoylation of GRIA1. Also regulates AMPR trafficking through the regulation of SACM1L phosphatidylinositol-3-phosphatase activity by interaction in a malonyl-CoA dependent manner. Binds malonyl-CoA and couples malonyl-CoA to ceramide levels, necessary for proper spine maturation and contributing to systemic energy homeostasis and appetite control. Binds to palmitoyl-CoA, but does not have carnitine palmitoyltransferase 1 catalytic activity or at very low levels. The chain is Palmitoyl thioesterase CPT1C (Cpt1c) from Rattus norvegicus (Rat).